The sequence spans 553 residues: Arginine--tRNA ligase (553 aa).

Residues 130-140 (ANPTGDLHIGH) carry the 'HIGH' region motif.

The protein belongs to the class-I aminoacyl-tRNA synthetase family. Monomer.

Its subcellular location is the cytoplasm. The catalysed reaction is tRNA(Arg) + L-arginine + ATP = L-arginyl-tRNA(Arg) + AMP + diphosphate. This Staphylococcus aureus (strain MRSA252) protein is Arginine--tRNA ligase.